We begin with the raw amino-acid sequence, 79 residues long: Hematopoietic cell signal transducer (79 aa).

Positions 1–17 (MDPPGYLLFLLLLPVAA) are cleaved as a signal peptide. The Extracellular segment spans residues 18 to 35 (SQTSAGSCSGCGTLSLPL). A helical transmembrane segment spans residues 36-56 (LAGLVAADAVMSLLIVGVVFV). The Cytoplasmic segment spans residues 57 to 79 (CMRPHGRPAQEDGRVYINMPGRG). Tyr-72 carries the phosphotyrosine modification. The segment at 72–74 (YIN) is GRB2 binding site. The interval 72–75 (YINM) is PIK3R1 binding site.

The protein belongs to the DAP10 family. Homodimer; Disulfide-linked. Interacts with KLRK1 to form a stable complex, which results in surface expression of both proteins, whereas alone, it is minimally expressed. Interacts with PIK3R1 and GRB2. Interacts with CLEC5A. Forms an CLEC5A/TYROBP/HCST trimolecular complex depending almost solely on TYROBP. Heterohexamer composed of four subunits of HCST/DAP10 and two subunits of KLRK1. Interacts (via transmembrane domain) with KLRK1 isoform 1 (via transmembrane domain); the interaction is required for KLRK1 cell surface expression on naive NK cells and activated CD8(+) T-cells, but is dispensable on activated TYROBP-expressing NK cells. Interacts (via transmembrane domain) with KLRK1 isoform 2 (via transmembrane domain); the interaction is required for KLRK1 NK cell surface expression and induces NK cell-mediated cytotoxicity. Interacts with CD300H. Post-translationally, phosphorylated; PIK3R1 and GRB2 associate specifically with tyrosine-phosphorylated HCST. In terms of processing, O-glycosylated.

Its subcellular location is the membrane. Functionally, transmembrane adapter protein which associates with KLRK1 to form an activation receptor KLRK1-HCST in lymphoid and myeloid cells; this receptor plays a major role in triggering cytotoxicity against target cells expressing cell surface ligands such as MHC class I chain-related MICA and MICB, and UL16-binding proteins (ULBPs); these ligands are up-regulated by stress conditions and pathological state such as viral infection and tumor transformation. Functions as a docking site for PI3-kinase PIK3R1 and GRB2. Interaction of ULBPs with KLRK1-HCST triggers calcium mobilization and activation of the PIK3R1, MAP2K/ERK, and JAK2/STAT5 signaling pathways. Both PIK3R1 and GRB2 are required for full KLRK1-HCST-mediated activation and ultimate killing of target cells. In NK cells, KLRK1-HCST signaling directly induces cytotoxicity and enhances cytokine production initiated via DAP12/TYROBP-associated receptors. In T-cells, it provides primarily costimulation for TCR-induced signals. KLRK1-HCST receptor plays a role in immune surveillance against tumors and is required for cytolysis of tumors cells; indeed, melanoma cells that do not express KLRK1 ligands escape from immune surveillance mediated by NK cells. In Mus musculus (Mouse), this protein is Hematopoietic cell signal transducer (Hcst).